A 475-amino-acid polypeptide reads, in one-letter code: 3-isopropylmalate dehydratase large subunit (475 aa).

Cysteine 348, cysteine 408, and cysteine 411 together coordinate [4Fe-4S] cluster.

Belongs to the aconitase/IPM isomerase family. LeuC type 1 subfamily. Heterodimer of LeuC and LeuD. [4Fe-4S] cluster serves as cofactor.

The catalysed reaction is (2R,3S)-3-isopropylmalate = (2S)-2-isopropylmalate. It functions in the pathway amino-acid biosynthesis; L-leucine biosynthesis; L-leucine from 3-methyl-2-oxobutanoate: step 2/4. Catalyzes the isomerization between 2-isopropylmalate and 3-isopropylmalate, via the formation of 2-isopropylmaleate. In Acidobacterium capsulatum (strain ATCC 51196 / DSM 11244 / BCRC 80197 / JCM 7670 / NBRC 15755 / NCIMB 13165 / 161), this protein is 3-isopropylmalate dehydratase large subunit.